The chain runs to 440 residues: Ran-specific GTPase-activating protein 30 (440 aa).

The RanBD1 domain maps to 1-314 (MDEILAKAGS…LVLKIDRSDD (314 aa)). The residue at position 272 (T272) is a Phosphothreonine. The segment covering 341–371 (IEEDEEEDEEEDEEEGKDGEERKEEEEEENK) has biased composition (acidic residues). The interval 341-375 (IEEDEEEDEEEDEEEGKDGEERKEEEEEENKLEDK) is disordered.

Interacts with GSP1.

The protein resides in the cytoplasm. It localises to the nucleus. Important for the export of protein containing nuclear export signal (NES) out of the nucleus. Stimulates the GTPase activity of GSP1. The chain is Ran-specific GTPase-activating protein 30 (YRB30) from Saccharomyces cerevisiae (strain ATCC 204508 / S288c) (Baker's yeast).